The following is a 986-amino-acid chain: MSKRVSAFGAEGDDEPQEKPMKPFISFSSNINNNNNSNNNNNNNNNNNNNNNNNNNKNNIGTGINLNIKNNNNINNNNNKSGFPVKKSRFNGEDDDDDYFFSNVPPKSSMTTLNKSPPNFENASSNNNNNNNNNNQESDSKNQNEDEDDEIDPLDAFMENVNAQAAIDNSKSIEKGQQQQQSLKSKRDDIDNEDDEEIFYKLRQKQLANKSSKQQQDDDVDYSSLDDDDGYFDDEESLKNGQSKGKRIIEPLPPIDHSKEEYIEFNKIFYEEHPDIANLTEEQVFEIRKNLDIRMTGTDLINPVTSFGHYGFDDILLQAIAKQSIETPTPIQKQAIPIALSGRDLIAIAKTGSGKTATFIWPSISHIMDQPYLEKGDGPIALFLAPTRELAHQIYLETLKYSKYFKLKTTVLYGGVSKQQQCKELKAGCEIIVATPGRLIDMIKLKATKLNRVSYLVLDEADKMFDFGFGPQVLSIVNHVRPDRQTLLFSATFKPNVEEFARTILSDPIKISIGMIGSANSDITQIVQVLKSDSDKWNWLTNQLALLLSQGSVLIFVSTKVAVEQLSSNLTKFGFQTCTLHGDKNQIERSQTIQTFKEGKINILIATDVAARGLDIPLIKNVVNYDTSRDIESHTHRIGRTGRAGNTGVAYTLITPKDIHFSVDLIKNLESASQFVPPELIDVAMNNPHFKRERGGGGGGSNRGRGRGGGGVGYRRNSRGGGVAFNSNRDSSRSDSQNKFIPAQSVEGGRLFNPNNTDNSEINNENEKSINNENKFSNNNSGSSNDRNSINYRNNSFNNNSNNTNNSGNSNFNNSNSNNGYSNNNYNNNYKNNSNYNNSNNNNNSYYNNNNSNNNNNSNYNNSSNNNNNNNNNYRNGNNNNNYNNNNYYNNNNSNNNSSNNNNSNNNSSNNNFNNNFNNNNNNNDNSNFNRALPFNDFNNNNNNSNNNNFNYNNNFNNSYNANNSNHYKNNNNSNNFNQRSQYNRR.

Disordered regions lie at residues 1–149, 165–192, and 206–252; these read MSKR…DEDD, AAID…DIDN, and QLAN…IEPL. Positions 29 to 82 are enriched in low complexity; the sequence is SNINNNNNSNNNNNNNNNNNNNNNNNNNKNNIGTGINLNIKNNNNINNNNNKSG. Residues 105 to 117 are compositionally biased toward polar residues; sequence PPKSSMTTLNKSP. Over residues 119 to 137 the composition is skewed to low complexity; it reads NFENASSNNNNNNNNNNQE. A compositionally biased stretch (acidic residues) spans 217–236; that stretch reads DDDVDYSSLDDDDGYFDDEE. The Q motif signature appears at 305-333; the sequence is TSFGHYGFDDILLQAIAKQSIETPTPIQK. The Helicase ATP-binding domain occupies 336-511; it reads IPIALSGRDL…RTILSDPIKI (176 aa). 349 to 356 lines the ATP pocket; that stretch reads AKTGSGKT. Residues 459-462 carry the DEAD box motif; it reads DEAD. A Helicase C-terminal domain is found at 522-684; that stretch reads DITQIVQVLK…FVPPELIDVA (163 aa). A disordered region spans residues 688–986; the sequence is PHFKRERGGG…FNQRSQYNRR (299 aa). Residues 696-723 show a composition bias toward gly residues; that stretch reads GGGGGSNRGRGRGGGGVGYRRNSRGGGV. 2 stretches are compositionally biased toward low complexity: residues 753–764 and 771–978; these read NPNNTDNSEINN and NNEN…NNFN.

The protein belongs to the DEAD box helicase family. DDX42 subfamily.

Its subcellular location is the nucleus. The enzyme catalyses ATP + H2O = ADP + phosphate + H(+). In terms of biological role, probable ATP-dependent RNA helicase which may bind to partially double-stranded RNAs (dsRNAs) in order to unwind RNA secondary structures. The sequence is that of Probable ATP-dependent RNA helicase ddx42 (ddx42) from Dictyostelium discoideum (Social amoeba).